The following is a 225-amino-acid chain: Protein GrpE (225 aa).

Positions 1-15 are enriched in polar residues; sequence MSGDASTPEQDQNVV. Disordered stretches follow at residues 1–48 and 198–225; these read MSGD…DRMQ and VSMG…AEEA. Residues 201 to 225 are compositionally biased toward low complexity; the sequence is GPGPSDPGSAPAEAAAAPDQTAEEA.

This sequence belongs to the GrpE family. As to quaternary structure, homodimer.

Its subcellular location is the cytoplasm. Functionally, participates actively in the response to hyperosmotic and heat shock by preventing the aggregation of stress-denatured proteins, in association with DnaK and GrpE. It is the nucleotide exchange factor for DnaK and may function as a thermosensor. Unfolded proteins bind initially to DnaJ; upon interaction with the DnaJ-bound protein, DnaK hydrolyzes its bound ATP, resulting in the formation of a stable complex. GrpE releases ADP from DnaK; ATP binding to DnaK triggers the release of the substrate protein, thus completing the reaction cycle. Several rounds of ATP-dependent interactions between DnaJ, DnaK and GrpE are required for fully efficient folding. This chain is Protein GrpE, found in Synechococcus sp. (strain CC9605).